Reading from the N-terminus, the 1582-residue chain is Nik-related protein kinase (1582 aa).

In terms of domain architecture, Protein kinase spans 25 to 313 (FSLDKTIGLG…SANMLQHPFV (289 aa)). ATP-binding positions include 31-39 (IGLGTYGRI) and Lys54. The Proton acceptor role is filled by Asp177. Composition is skewed to low complexity over residues 492–507 (QVQS…QTQT), 527–538 (PEQQRQGQAPEQ), and 551–572 (EQNQ…AQAE). The disordered stretch occupies residues 492-579 (QVQSQVSKKQ…QAETEAEEPE (88 aa)). The stretch at 725 to 759 (QRRQRRWEDIFNQHEEELRQVDKDKEDESSDNDEV) forms a coiled coil. Disordered stretches follow at residues 783 to 859 (EVQE…PPYS) and 926 to 1156 (ASAD…GSGM). Composition is skewed to polar residues over residues 803-814 (FSSSVPQRSLLE), 825-834 (RSSQNRQNWL), and 850-859 (RRSQSSPPYS). 2 positions are modified to phosphoserine: Ser852 and Ser855. Residues 926 to 944 (ASADTDGDDDDESNDTFED) are compositionally biased toward acidic residues. Composition is skewed to basic and acidic residues over residues 965 to 978 (VCKD…KFVD) and 999 to 1016 (GSCK…EEAY). 3 positions are modified to phosphoserine: Ser1027, Ser1031, and Ser1034. Basic and acidic residues-rich tracts occupy residues 1043 to 1061 (QEEH…EGDG) and 1125 to 1135 (PDHESDNKDIS). A compositionally biased stretch (polar residues) spans 1136 to 1154 (ESSTQSDFSANHSSPSKGS). The 344-residue stretch at 1209-1552 (TSEICCGSLW…RFLCTRGDKL (344 aa)) folds into the CNH domain.

This sequence belongs to the protein kinase superfamily. STE Ser/Thr protein kinase family. STE20 subfamily.

It carries out the reaction L-seryl-[protein] + ATP = O-phospho-L-seryl-[protein] + ADP + H(+). The catalysed reaction is L-threonyl-[protein] + ATP = O-phospho-L-threonyl-[protein] + ADP + H(+). Its function is as follows. May phosphorylate cofilin-1 and induce actin polymerization through this process, during the late stages of embryogenesis. Involved in the TNF-alpha-induced signaling pathway. This chain is Nik-related protein kinase (NRK), found in Homo sapiens (Human).